The sequence spans 415 residues: Probable tRNA pseudouridine synthase D (415 aa).

Asp83 functions as the Nucleophile in the catalytic mechanism. Positions 158–378 constitute a TRUD domain; the sequence is GFPNYFGYQR…PGRRRELLIR (221 aa).

It belongs to the pseudouridine synthase TruD family.

The enzyme catalyses uridine(13) in tRNA = pseudouridine(13) in tRNA. Its function is as follows. Could be responsible for synthesis of pseudouridine from uracil-13 in transfer RNAs. The sequence is that of Probable tRNA pseudouridine synthase D from Thermococcus gammatolerans (strain DSM 15229 / JCM 11827 / EJ3).